The following is a 335-amino-acid chain: Phosphate acyltransferase (335 aa).

The protein belongs to the PlsX family. As to quaternary structure, homodimer. Probably interacts with PlsY.

Its subcellular location is the cytoplasm. The enzyme catalyses a fatty acyl-[ACP] + phosphate = an acyl phosphate + holo-[ACP]. Its pathway is lipid metabolism; phospholipid metabolism. In terms of biological role, catalyzes the reversible formation of acyl-phosphate (acyl-PO(4)) from acyl-[acyl-carrier-protein] (acyl-ACP). This enzyme utilizes acyl-ACP as fatty acyl donor, but not acyl-CoA. This Clostridium botulinum (strain ATCC 19397 / Type A) protein is Phosphate acyltransferase.